The sequence spans 535 residues: Sodium channel protein Nach (535 aa).

Residues 1 to 49 are Cytoplasmic-facing; that stretch reads MGHQEELKPEQVDLKVTPFVGYLRRTWSDFCATSSIHGLKYTRDEDTNK. A helical transmembrane segment spans residues 50–70; sequence IVHLVWLLISVVMFICAVVMA. Residues 71 to 471 are Extracellular-facing; that stretch reads RTFYMDYRSS…LVSNLGSAFS (401 aa). 3 N-linked (GlcNAc...) asparagine glycosylation sites follow: N165, N239, and N367. A helical transmembrane segment spans residues 472–492; it reads LFVGMSMLSVVEIIYYFSVIL. Topologically, residues 493–535 are cytoplasmic; sequence RKNYKLECETRSQMLHKKPKFAWPKANDTHSKEQKSVFIIHKS.

The protein belongs to the amiloride-sensitive sodium channel (TC 1.A.6) family. In terms of tissue distribution, embryonic and larval tracheal system; dorsal trunk (but not at fusion with transverse connective), several branches and terminal cells. Also expressed in adult tracheal system; dorsal trunk, but not at the spiracles.

Its subcellular location is the membrane. Its function is as follows. Part of a complex that plays a role in tracheal liquid clearance. Probable role in sodium transport. This Drosophila melanogaster (Fruit fly) protein is Sodium channel protein Nach (Nach).